Here is a 707-residue protein sequence, read N- to C-terminus: Elongation factor G (707 aa).

A tr-type G domain is found at 8-290 (ERYRNIGICA…AVIEYLPSPT (283 aa)). GTP-binding positions include 17–24 (AHVDAGKT), 88–92 (DTPGH), and 142–145 (NKMD).

It belongs to the TRAFAC class translation factor GTPase superfamily. Classic translation factor GTPase family. EF-G/EF-2 subfamily.

It is found in the cytoplasm. Its function is as follows. Catalyzes the GTP-dependent ribosomal translocation step during translation elongation. During this step, the ribosome changes from the pre-translocational (PRE) to the post-translocational (POST) state as the newly formed A-site-bound peptidyl-tRNA and P-site-bound deacylated tRNA move to the P and E sites, respectively. Catalyzes the coordinated movement of the two tRNA molecules, the mRNA and conformational changes in the ribosome. The sequence is that of Elongation factor G from Idiomarina loihiensis (strain ATCC BAA-735 / DSM 15497 / L2-TR).